Consider the following 227-residue polypeptide: ATP synthase F(0) complex subunit a (227 aa).

6 helical membrane-spanning segments follow: residues 14–34, 73–93, 98–118, 137–157, 179–199, and 203–223; these read FLGI…IPTP, LASL…PYIF, QLSL…LIGM, ALIP…PLAL, VFVL…LLLL, and LEVA…SLYL.

The protein belongs to the ATPase A chain family. Component of the ATP synthase complex composed at least of ATP5F1A/subunit alpha, ATP5F1B/subunit beta, ATP5MC1/subunit c (homooctomer), MT-ATP6/subunit a, MT-ATP8/subunit 8, ATP5ME/subunit e, ATP5MF/subunit f, ATP5MG/subunit g, ATP5MK/subunit k, ATP5MJ/subunit j, ATP5F1C/subunit gamma, ATP5F1D/subunit delta, ATP5F1E/subunit epsilon, ATP5PF/subunit F6, ATP5PB/subunit b, ATP5PD/subunit d, ATP5PO/subunit OSCP. ATP synthase complex consists of a soluble F(1) head domain (subunits alpha(3) and beta(3)) - the catalytic core - and a membrane F(0) domain - the membrane proton channel (subunits c, a, 8, e, f, g, k and j). These two domains are linked by a central stalk (subunits gamma, delta, and epsilon) rotating inside the F1 region and a stationary peripheral stalk (subunits F6, b, d, and OSCP). Interacts with DNAJC30; interaction is direct.

It is found in the mitochondrion inner membrane. The catalysed reaction is H(+)(in) = H(+)(out). Functionally, subunit a, of the mitochondrial membrane ATP synthase complex (F(1)F(0) ATP synthase or Complex V) that produces ATP from ADP in the presence of a proton gradient across the membrane which is generated by electron transport complexes of the respiratory chain. ATP synthase complex consist of a soluble F(1) head domain - the catalytic core - and a membrane F(1) domain - the membrane proton channel. These two domains are linked by a central stalk rotating inside the F(1) region and a stationary peripheral stalk. During catalysis, ATP synthesis in the catalytic domain of F(1) is coupled via a rotary mechanism of the central stalk subunits to proton translocation. With the subunit c (ATP5MC1), forms the proton-conducting channel in the F(0) domain, that contains two crucial half-channels (inlet and outlet) that facilitate proton movement from the mitochondrial intermembrane space (IMS) into the matrix. Protons are taken up via the inlet half-channel and released through the outlet half-channel, following a Grotthuss mechanism. This Gadus morhua (Atlantic cod) protein is ATP synthase F(0) complex subunit a.